Here is a 554-residue protein sequence, read N- to C-terminus: Inactive sesquithujene synthase B (554 aa).

Mg(2+) contacts are provided by D308 and D312. Substrate is bound by residues D308, D312, R449, and N452. Residues 308 to 312 (DDMFD) carry the DDXXD motif motif. Residues N452, S456, and E460 each coordinate Mg(2+).

It belongs to the terpene synthase family. Monomer. Mg(2+) is required as a cofactor. Mn(2+) serves as cofactor.

Its subcellular location is the cytoplasm. It functions in the pathway secondary metabolite biosynthesis; terpenoid biosynthesis. Functionally, non-functional sesquiterpene synthase having less than 1% of the activity found in TPS5A. The chain is Inactive sesquithujene synthase B from Zea mays (Maize).